The sequence spans 159 residues: Phosphopantetheine adenylyltransferase (159 aa).

Residue Ser-8 participates in substrate binding. ATP-binding positions include 8-9 (SF) and His-16. Substrate-binding residues include Lys-40, Leu-72, and Arg-86. ATP-binding positions include 87–89 (GLR), Glu-97, and 122–128 (YSFISSS).

This sequence belongs to the bacterial CoaD family. In terms of assembly, homohexamer. Mg(2+) serves as cofactor.

The protein localises to the cytoplasm. It catalyses the reaction (R)-4'-phosphopantetheine + ATP + H(+) = 3'-dephospho-CoA + diphosphate. Its pathway is cofactor biosynthesis; coenzyme A biosynthesis; CoA from (R)-pantothenate: step 4/5. Its function is as follows. Reversibly transfers an adenylyl group from ATP to 4'-phosphopantetheine, yielding dephospho-CoA (dPCoA) and pyrophosphate. In Thermosipho melanesiensis (strain DSM 12029 / CIP 104789 / BI429), this protein is Phosphopantetheine adenylyltransferase.